Reading from the N-terminus, the 87-residue chain is Small ribosomal subunit protein bS20 (87 aa).

Residues 1–22 (MAHHKSALKRIKQNKRKQFRNK) form a disordered region.

The protein belongs to the bacterial ribosomal protein bS20 family.

Its function is as follows. Binds directly to 16S ribosomal RNA. In Geobacter metallireducens (strain ATCC 53774 / DSM 7210 / GS-15), this protein is Small ribosomal subunit protein bS20.